The chain runs to 385 residues: Putative 8-amino-7-oxononanoate synthase (385 aa).

Arginine 22 lines the substrate pocket. 109 to 110 (GY) contributes to the pyridoxal 5'-phosphate binding site. Histidine 134 serves as a coordination point for substrate. Pyridoxal 5'-phosphate is bound by residues serine 182, 207 to 210 (DEAH), and 238 to 241 (TLSK). Lysine 241 is modified (N6-(pyridoxal phosphate)lysine). Threonine 353 provides a ligand contact to substrate.

This sequence belongs to the class-II pyridoxal-phosphate-dependent aminotransferase family. BioF subfamily. As to quaternary structure, homodimer. The cofactor is pyridoxal 5'-phosphate.

It catalyses the reaction 6-carboxyhexanoyl-[ACP] + L-alanine + H(+) = (8S)-8-amino-7-oxononanoate + holo-[ACP] + CO2. Its pathway is cofactor biosynthesis; biotin biosynthesis. Catalyzes the decarboxylative condensation of pimeloyl-[acyl-carrier protein] and L-alanine to produce 8-amino-7-oxononanoate (AON), [acyl-carrier protein], and carbon dioxide. The sequence is that of Putative 8-amino-7-oxononanoate synthase (bioF) from Microcystis aeruginosa (strain NIES-843 / IAM M-2473).